A 224-amino-acid polypeptide reads, in one-letter code: ATP phosphoribosyltransferase (224 aa).

The protein belongs to the ATP phosphoribosyltransferase family. Short subfamily. In terms of assembly, heteromultimer composed of HisG and HisZ subunits.

The protein resides in the cytoplasm. It carries out the reaction 1-(5-phospho-beta-D-ribosyl)-ATP + diphosphate = 5-phospho-alpha-D-ribose 1-diphosphate + ATP. The protein operates within amino-acid biosynthesis; L-histidine biosynthesis; L-histidine from 5-phospho-alpha-D-ribose 1-diphosphate: step 1/9. Functionally, catalyzes the condensation of ATP and 5-phosphoribose 1-diphosphate to form N'-(5'-phosphoribosyl)-ATP (PR-ATP). Has a crucial role in the pathway because the rate of histidine biosynthesis seems to be controlled primarily by regulation of HisG enzymatic activity. The chain is ATP phosphoribosyltransferase from Cupriavidus pinatubonensis (strain JMP 134 / LMG 1197) (Cupriavidus necator (strain JMP 134)).